The sequence spans 208 residues: Putative 3-methyladenine DNA glycosylase (208 aa).

Residues 1-20 are disordered; that stretch reads MGRAHTVSRGEDHPPIARSE.

It belongs to the DNA glycosylase MPG family.

The polypeptide is Putative 3-methyladenine DNA glycosylase (Mesorhizobium japonicum (strain LMG 29417 / CECT 9101 / MAFF 303099) (Mesorhizobium loti (strain MAFF 303099))).